Reading from the N-terminus, the 1367-residue chain is MSFPDEETDLLSEAKHCIRNVIHRTHRKFLENRLIGNFDSEDFSDAWKKKFAHAPTWCDADMSLQQIKRGKAVGNTVALTARAFFQLWLFRIGCFVQRWAWSTIFISLFLYCLCLGGLRHVTIETDLVKLWVSEGGRLNEEMGYLGQVKFERESGHLVHKVKRAVEQTTEPPAPAVKAEVRRGPELPKENGLGGGFQVVIQTPSFDGQNILSKEALQQHTKLMEEISTYEVKMFNETWTLSDICFKPPGPSFNSGPLAGIMSKLLDKIIPCIWITPIDCYWDGAKPLGPNPPLNLGPEVASFVSSLPPGNVTWKNLNPTSVIKEVGTLFDLGPIGNFFERAGIDGAYLDRPCIDPLEEECPKSAPNYFDRCHALTKFNEWNMAKAMSEQVTLERKIIPKDDGKSDIAETILNDIFGKKRRKRQADTTTKKPATKKDEDYYEYEDDADYLAGIANSTIAKKNPEKEAKDLLCLEYGSSLLKWMQENPERLGEFLTKEEMPDYPNYGDVMTGGCKGFGKKIMEWPEDLIIGGIQRDNGKLVSAEALQSVFLVSGAYDVFARIKNDKTDSHPGLDRHHFQPWMAGEIISTWQRNFTKRLYSHELNRERRQFHPLASTSIADMLEEFSQFNYIIIVIGYILMVIYAAFTQGRFQGWWLAVQSNVALAICGVILVTISSICGLGFATHLGINFNAATTQVVPFLSLGLGIDDMFLLLHNYDEIINICNKNEIGVLLKETGMSVMLTSINNILAFISGYVLPIPALRSFCSQTAILLAFNLIFLMFIFPAMIGIDLRRQRKGKRDLAYCSRGNPQMATSQSVPSNVSNMSSRAELAGYEKQADEYKRHEPWYTVGGFLNKIYIPALKNNVVKACVLIGTTTAVVFGLYGMYTSTLGLELADVLPEHTPPAAFLRAREQYFSFYPMFAVLRGDKLDIPNQQQLIEEYRAQLGSSKFMIKAEGKLQPYWMSMLRVWLQSLDMALEKDLAAGKFDLTNGNPIKVNGEKPSPESMIAARLVCSFGTNYNCDGRLGKMKMVENEVINPEGFYNYLTGWFNVDNMMYYVSQASFYPTPPGWEYNEKLAKVVPAAEPLLYSQMPFYQNDLIDTPAIVKMIEEIRATCEEYSERGLSNHPSGIAFTFWEQYLTLRWNLFQAICIIALAVFCVISILMFNPWAATLIMCIVVITTIELGGFMGLMGIKMNPISAVTLICAVGIGVEFTAHVELAFLTALGTIDQRLESCLQHMFVPVYHGAISTFLGVVMLVFSEFDFVVTYFFYTMTLLVALGVFNGLCVLPVILTLVGPKPELTPTDGSSVLPPPPPLRQQYAEKSGGVEGGMRKRKEKRPAEVEMSARDSPSTSSASHSSDDESSPAHK.

The Cytoplasmic segment spans residues 1 to 97 (MSFPDEETDL…WLFRIGCFVQ (97 aa)). The chain crosses the membrane as a helical span at residues 98–118 (RWAWSTIFISLFLYCLCLGGL). Topologically, residues 119–625 (RHVTIETDLV…IADMLEEFSQ (507 aa)) are extracellular. 4 N-linked (GlcNAc...) asparagine glycosylation sites follow: Asn235, Asn310, Asn454, and Asn591. The helical transmembrane segment at 626 to 646 (FNYIIIVIGYILMVIYAAFTQ) threads the bilayer. In terms of domain architecture, SSD spans 627-788 (NYIIIVIGYI…MFIFPAMIGI (162 aa)). The Cytoplasmic portion of the chain corresponds to 647 to 659 (GRFQGWWLAVQSN). Residues 660-680 (VALAICGVILVTISSICGLGF) form a helical membrane-spanning segment. The Extracellular portion of the chain corresponds to 681–694 (ATHLGINFNAATTQ). Residues 695–715 (VVPFLSLGLGIDDMFLLLHNY) form a helical membrane-spanning segment. The Cytoplasmic segment spans residues 716-737 (DEIINICNKNEIGVLLKETGMS). A helical membrane pass occupies residues 738 to 758 (VMLTSINNILAFISGYVLPIP). Over 759-767 (ALRSFCSQT) the chain is Extracellular. Residues 768–788 (AILLAFNLIFLMFIFPAMIGI) form a helical membrane-spanning segment. Residues 789–863 (DLRRQRKGKR…KIYIPALKNN (75 aa)) are Cytoplasmic-facing. A helical membrane pass occupies residues 864–884 (VVKACVLIGTTTAVVFGLYGM). Residues 885-1143 (YTSTLGLELA…WEQYLTLRWN (259 aa)) lie on the Extracellular side of the membrane. Residues 1144–1164 (LFQAICIIALAVFCVISILMF) form a helical membrane-spanning segment. The Cytoplasmic segment spans residues 1165–1171 (NPWAATL). A helical membrane pass occupies residues 1172–1192 (IMCIVVITTIELGGFMGLMGI). At 1193–1199 (KMNPISA) the chain is on the extracellular side. A helical membrane pass occupies residues 1200 to 1220 (VTLICAVGIGVEFTAHVELAF). Residues 1221-1237 (LTALGTIDQRLESCLQH) are Cytoplasmic-facing. Residues 1238 to 1258 (MFVPVYHGAISTFLGVVMLVF) traverse the membrane as a helical segment. At 1259 to 1273 (SEFDFVVTYFFYTMT) the chain is on the extracellular side. The chain crosses the membrane as a helical span at residues 1274–1294 (LLVALGVFNGLCVLPVILTLV). At 1295–1367 (GPKPELTPTD…SDDESSPAHK (73 aa)) the chain is on the cytoplasmic side. The tract at residues 1302–1367 (PTDGSSVLPP…SDDESSPAHK (66 aa)) is disordered. The segment covering 1346-1356 (RDSPSTSSASH) has biased composition (low complexity).

It belongs to the patched family. In terms of tissue distribution, in males, expressed in the precursor and mature sensory rays, the cloaca, and pre-anal ganglia and cephalic neurons. Also expressed in five cells in the valve region between the seminal vesicle and vas deferens of the somatic gonad.

Its subcellular location is the apical cell membrane. It is found in the cell junction. The protein localises to the adherens junction. Regulates osmosis during embryonic development. Required for larval development and in particular is involved in larval molting. This is Protein patched homolog 3 from Caenorhabditis elegans.